An 860-amino-acid polypeptide reads, in one-letter code: Nucleolar MIF4G domain-containing protein 1 (860 aa).

3 disordered regions span residues 1-172 (MAAS…AARK), 191-211 (RCLG…PLSF), and 226-339 (GKNS…EKYI). The segment at 1–269 (MAASRSAGEA…EEEEEGDVEK (269 aa)) is necessary for nucleolar localization and for targeting PPP1CA to the nucleolus. Residues 20-31 (VRMKRRGGRGPR) are compositionally biased toward basic residues. The residue at position 57 (S57) is a Phosphoserine. Residues 77–99 (GGRKSRKELRKEKRHLRKARRLQ) are compositionally biased toward basic residues. Positions 115–131 (GAEEASGHRQDTEERAR) are enriched in basic and acidic residues. Phosphoserine is present on S139. Residues 142 to 151 (RKPRPSRVKA) are compositionally biased toward basic residues. A compositionally biased stretch (low complexity) spans 152-169 (KATAATAKTRPSAAATAA). Composition is skewed to acidic residues over residues 249 to 267 (SDLE…EGDV) and 278 to 293 (AQSE…EQGE). Positions 307–310 (RVRF) match the Required for efficient binding to PPP1CA and for targeting PPP1CA to the nucleolus motif. Positions 312–325 (EDEEKSENSSEDGD) are enriched in acidic residues. Residues S317, S320, and S321 each carry the phosphoserine modification. Residues 362–559 (KKHVKGLLNR…ETMLALKNND (198 aa)) form the MIF4G domain. Positions 654 to 770 (DIRRNIFCTI…SLSILKVVEF (117 aa)) constitute an MI domain.

It belongs to the CWC22 family. In terms of assembly, may interact with EIF4A1, EIF4A2 and EIF4A3. Interacts with PPP1CA and PPP1CC. Expressed in heart and skeletal muscle.

Its subcellular location is the nucleus. It localises to the nucleolus. In terms of biological role, plays a role in targeting PPP1CA to the nucleolus. This Homo sapiens (Human) protein is Nucleolar MIF4G domain-containing protein 1 (NOM1).